Consider the following 205-residue polypeptide: Low-density lipoprotein receptor class A domain-containing protein 1 (205 aa).

Residues 43–63 (LLLLLATVAALIALVTILGLP) form a helical membrane-spanning segment. The LDL-receptor class A 1 domain maps to 71–114 (ACITLTNRTGFLCHDQRSCIPASGVCDGVRTCTHGEDEDESLCR). Disulfide bonds link C72/C89, C83/C102, C96/C113, C141/C160, C163/C180, and C170/C193. In terms of domain architecture, LDL-receptor class A 2; atypical spans 115–161 (DVPQSLPHFLVAHCGDPASWIYSDQKCDGTNNCGDCSDELSPVTVCP). Residues 162–203 (PCGPGWWRCPSTFFKYCDCIPRHLCRDHVQHCSDWSDEYACP) form the LDL-receptor class A 3; atypical domain.

It belongs to the LDLR family.

It localises to the membrane. This Homo sapiens (Human) protein is Low-density lipoprotein receptor class A domain-containing protein 1 (LDLRAD1).